The primary structure comprises 248 residues: 14-3-3 protein sigma (248 aa).

Ser-5, Ser-74, and Ser-248 each carry phosphoserine.

Belongs to the 14-3-3 family. Homodimer. Interacts with KRT17 and SAMSN1. Found in a complex with XPO7, EIF4A1, ARHGAP1, VPS26A, VPS29 and VPS35. Interacts with GAB2. Interacts with SRPK2. Interacts with COPS6. Interacts with COP1; this interaction leads to proteasomal degradation. Interacts with the 'Thr-369' phosphorylated form of DAPK2. Interacts with PI4KB. Interacts with SLITRK1. Interacts with LRRK2; this interaction is dependent on LRRK2 phosphorylation. Interacts with PKP3 (via N-terminus); the interaction maintains the cytoplasmic pool of PKP3, facilitates PKP3 exchange at desmosomes and restricts PKP3 localization to existing desmosome cell junctions. Interacts with LCP2. In terms of processing, ubiquitinated. Ubiquitination by RFFL induces proteasomal degradation and indirectly regulates p53/TP53 activation. Present mainly in tissues enriched in stratified squamous keratinizing epithelium.

It localises to the cytoplasm. The protein resides in the nucleus. Its subcellular location is the secreted. In terms of biological role, adapter protein implicated in the regulation of a large spectrum of both general and specialized signaling pathways. Binds to a large number of partners, usually by recognition of a phosphoserine or phosphothreonine motif. Binding generally results in the modulation of the activity of the binding partner. Promotes cytosolic retention of GBP1 GTPase by binding to phosphorylated GBP1, thereby inhibiting the innate immune response. Also acts as a TP53/p53-regulated inhibitor of G2/M progression. When bound to KRT17, regulates protein synthesis and epithelial cell growth by stimulating Akt/mTOR pathway. Acts to maintain desmosome cell junction adhesion in epithelial cells via interacting with and sequestering PKP3 to the cytoplasm, thereby restricting its translocation to existing desmosome structures and therefore maintaining desmosome protein homeostasis. Also acts to facilitate PKP3 exchange at desmosome plaques, thereby maintaining keratinocyte intercellular adhesion. May also regulate MDM2 autoubiquitination and degradation and thereby activate p53/TP53. This chain is 14-3-3 protein sigma (SFN), found in Homo sapiens (Human).